The sequence spans 121 residues: MARIAGVDIPREKRIVISLTYVYGIGTSTAKKIVEEANVSADTRVKDLTDDELGRIREVVDSYKVEGDLRREQNLNIKRLMEISSYRGIRHRRGLPVRGQKTKNNARTRKGPVKTVANKKK.

Positions 91–121 (HRRGLPVRGQKTKNNARTRKGPVKTVANKKK) are disordered.

This sequence belongs to the universal ribosomal protein uS13 family. In terms of assembly, part of the 30S ribosomal subunit. Forms a loose heterodimer with protein S19. Forms two bridges to the 50S subunit in the 70S ribosome.

Located at the top of the head of the 30S subunit, it contacts several helices of the 16S rRNA. In the 70S ribosome it contacts the 23S rRNA (bridge B1a) and protein L5 of the 50S subunit (bridge B1b), connecting the 2 subunits; these bridges are implicated in subunit movement. Contacts the tRNAs in the A and P-sites. The protein is Small ribosomal subunit protein uS13 of Staphylococcus haemolyticus (strain JCSC1435).